We begin with the raw amino-acid sequence, 186 residues long: Low amplitude and bright protein LabA (186 aa).

Functions in an output pathway of the circadian clock. One of three clock output pathways. Involved in negative feedback regulation of KaiC; deletion leads to overexpression of KaiC protein and decreases the amplitude of the circadian response. Overexpression reduces the expression of circadian genes. This chain is Low amplitude and bright protein LabA, found in Synechococcus elongatus (strain ATCC 33912 / PCC 7942 / FACHB-805) (Anacystis nidulans R2).